The sequence spans 393 residues: NAD(P)H-quinone oxidoreductase subunit H, chloroplastic (393 aa).

The protein belongs to the complex I 49 kDa subunit family. In terms of assembly, NDH is composed of at least 16 different subunits, 5 of which are encoded in the nucleus.

It is found in the plastid. It localises to the chloroplast thylakoid membrane. It carries out the reaction a plastoquinone + NADH + (n+1) H(+)(in) = a plastoquinol + NAD(+) + n H(+)(out). The catalysed reaction is a plastoquinone + NADPH + (n+1) H(+)(in) = a plastoquinol + NADP(+) + n H(+)(out). Functionally, NDH shuttles electrons from NAD(P)H:plastoquinone, via FMN and iron-sulfur (Fe-S) centers, to quinones in the photosynthetic chain and possibly in a chloroplast respiratory chain. The immediate electron acceptor for the enzyme in this species is believed to be plastoquinone. Couples the redox reaction to proton translocation, and thus conserves the redox energy in a proton gradient. The polypeptide is NAD(P)H-quinone oxidoreductase subunit H, chloroplastic (Crucihimalaya wallichii (Rock-cress)).